Here is a 349-residue protein sequence, read N- to C-terminus: Insulin gene enhancer protein isl-1 (349 aa).

LIM zinc-binding domains lie at 17–70 (CVGC…CKRD) and 79–133 (CAKC…RADH). Residues 181 to 240 (TTRVRTVLNEKQLHTLRTCYNANPRPDALMKEQLVEMTGLSPRVIRVWFQNKRCKDKKRS) constitute a DNA-binding region (homeobox). Residues 312-349 (VNFSEGGPGSNSTGSEVASMSSQLPDTPNSMVASPIEA) are disordered. Polar residues predominate over residues 321-343 (SNSTGSEVASMSSQLPDTPNSMV).

It is found in the nucleus. Functionally, DNA-binding transcriptional activator. Recognizes and binds to the consensus octamer binding site 5'-ATAATTAA-3' in promoter of target genes. Plays a fundamental role in the gene regulatory network essential for retinal ganglion cell (RGC) differentiation. May be involved in subtype specialization of primary motoneurons. May bind to insulin gene enhancer sequences. Essential for heart development. The chain is Insulin gene enhancer protein isl-1 (isl1) from Danio rerio (Zebrafish).